We begin with the raw amino-acid sequence, 394 residues long: Tryptophan synthase beta chain (394 aa).

Lys-84 bears the N6-(pyridoxal phosphate)lysine mark.

Belongs to the TrpB family. As to quaternary structure, tetramer of two alpha and two beta chains. It depends on pyridoxal 5'-phosphate as a cofactor.

The catalysed reaction is (1S,2R)-1-C-(indol-3-yl)glycerol 3-phosphate + L-serine = D-glyceraldehyde 3-phosphate + L-tryptophan + H2O. Its pathway is amino-acid biosynthesis; L-tryptophan biosynthesis; L-tryptophan from chorismate: step 5/5. Its function is as follows. The beta subunit is responsible for the synthesis of L-tryptophan from indole and L-serine. The polypeptide is Tryptophan synthase beta chain (Clostridium acetobutylicum (strain ATCC 824 / DSM 792 / JCM 1419 / IAM 19013 / LMG 5710 / NBRC 13948 / NRRL B-527 / VKM B-1787 / 2291 / W)).